A 203-amino-acid polypeptide reads, in one-letter code: Secreted phosphoprotein 24 (203 aa).

An N-terminal signal peptide occupies residues 1–23 (MELATMKTLVMLVLGMHYWCASG). Disulfide bonds link Cys86–Cys96 and Cys109–Cys127. Phosphoserine is present on Ser90. Ser137, Ser138, and Ser174 each carry phosphoserine.

Belongs to the SPP2 family. Multiply phosphorylated at serine residues. In terms of processing, phosphorylation sites are present in the extracellular medium.

Its subcellular location is the secreted. In terms of biological role, could coordinate an aspect of bone turnover. This chain is Secreted phosphoprotein 24 (Spp2), found in Rattus norvegicus (Rat).